We begin with the raw amino-acid sequence, 687 residues long: RNA-binding protein VTS1 (687 aa).

Residues 1–10 (MASHTLRPHR) show a composition bias toward basic residues. Disordered regions lie at residues 1–115 (MASH…TPEA), 248–341 (AAAK…PGIG), and 526–598 (SPFN…AGVA). The segment covering 29-41 (TRQSLGPPTSGNS) has biased composition (polar residues). A compositionally biased stretch (low complexity) spans 52–68 (GLASPSSPSQPRHVSSS). A compositionally biased stretch (polar residues) spans 287–301 (GLESNMSGRSRSKSP). Residues 305 to 324 (PRPKSTDFSGKPRESLRRES) are compositionally biased toward basic and acidic residues. A compositionally biased stretch (polar residues) spans 526–539 (SPFNASAPSLQPGL). Residues 550-566 (QSSHLNQHYNQHQQQHQ) are compositionally biased toward low complexity. The span at 585 to 597 (QTGGGGAGGGAGV) shows a compositional bias: gly residues. In terms of domain architecture, SAM spans 606-667 (KVLEDVPNWL…LKVFYNVRTK (62 aa)).

Belongs to the VTS1 family. As to quaternary structure, monomer. Binds to RNA.

It localises to the cytoplasm. It is found in the cytosol. The protein resides in the P-body. In terms of biological role, RNA-binding protein involved in post-transcriptional regulation through transcript degradation. This chain is RNA-binding protein VTS1, found in Cryptococcus neoformans var. grubii serotype A (strain H99 / ATCC 208821 / CBS 10515 / FGSC 9487) (Filobasidiella neoformans var. grubii).